The sequence spans 237 residues: Ribonuclease PH (237 aa).

Phosphate is bound by residues Arg86 and 124–126; that span reads GTR.

This sequence belongs to the RNase PH family. As to quaternary structure, homohexameric ring arranged as a trimer of dimers.

The enzyme catalyses tRNA(n+1) + phosphate = tRNA(n) + a ribonucleoside 5'-diphosphate. Phosphorolytic 3'-5' exoribonuclease that plays an important role in tRNA 3'-end maturation. Removes nucleotide residues following the 3'-CCA terminus of tRNAs; can also add nucleotides to the ends of RNA molecules by using nucleoside diphosphates as substrates, but this may not be physiologically important. Probably plays a role in initiation of 16S rRNA degradation (leading to ribosome degradation) during starvation. In Myxococcus xanthus (strain DK1622), this protein is Ribonuclease PH.